The chain runs to 1058 residues: Ubiquitin-like modifier-activating enzyme 1 (1058 aa).

Positions 1 to 46 (MSSSPLSKKRRVSGPDPKPGSNCSPAQSALSEVSSVPTNGMAKNGS) are disordered. Ser2 bears the N-acetylserine mark. Ser4, Ser13, Ser21, Ser24, and Ser46 each carry phosphoserine. Positions 21–38 (SNCSPAQSALSEVSSVPT) are enriched in polar residues. Residue Tyr55 is modified to Phosphotyrosine. 2 tandem repeats follow at residues 63–199 (GHEA…GQLF) and 459–611 (GSDF…QVVI). The segment at 63-611 (GHEAMKMLQT…GTKGNVQVVI (549 aa)) is 2 approximate repeats. ATP-binding positions include Ala478, Asp504, Arg515, Lys528, and 576-577 (DN). Lys528 carries the post-translational modification N6-succinyllysine. The active-site Glycyl thioester intermediate is Cys632. Lys671 bears the N6-acetyllysine mark. Thr800 carries the phosphothreonine modification. Phosphoserine occurs at positions 810, 816, 820, and 835. N6-acetyllysine is present on Lys980.

It belongs to the ubiquitin-activating E1 family. Monomer. Interacts with GAN (via BTB domain). Post-translationally, ISGylated. Ubiquitously expressed. In testis, expressed in A spermatogonia and spermatids but at very low levels in pachytene spermatocytes.

Its subcellular location is the cytoplasm. It is found in the mitochondrion. The protein resides in the nucleus. It catalyses the reaction ATP + ubiquitin + [E1 ubiquitin-activating enzyme]-L-cysteine = AMP + diphosphate + S-ubiquitinyl-[E1 ubiquitin-activating enzyme]-L-cysteine.. The protein operates within protein modification; protein ubiquitination. Functionally, catalyzes the first step in ubiquitin conjugation to mark cellular proteins for degradation through the ubiquitin-proteasome system. Activates ubiquitin by first adenylating its C-terminal glycine residue with ATP, and thereafter linking this residue to the side chain of a cysteine residue in E1, yielding a ubiquitin-E1 thioester and free AMP. Essential for the formation of radiation-induced foci, timely DNA repair and for response to replication stress. Promotes the recruitment of TP53BP1 and BRCA1 at DNA damage sites. The sequence is that of Ubiquitin-like modifier-activating enzyme 1 (Uba1) from Mus musculus (Mouse).